Here is a 128-residue protein sequence, read N- to C-terminus: Large ribosomal subunit protein uL18 (128 aa).

It belongs to the universal ribosomal protein uL18 family. Part of the 50S ribosomal subunit; part of the 5S rRNA/L5/L18/L25 subcomplex. Contacts the 5S and 23S rRNAs.

In terms of biological role, this is one of the proteins that bind and probably mediate the attachment of the 5S RNA into the large ribosomal subunit, where it forms part of the central protuberance. This Acidothermus cellulolyticus (strain ATCC 43068 / DSM 8971 / 11B) protein is Large ribosomal subunit protein uL18.